A 153-amino-acid chain; its full sequence is MPPPSLAMVSGQALPAFLLCSTLLVIKMYAVAVITGQVRLRKKAFANPEDALRHGGLQFHRDDQDVERCLRAHRNDMETIYPFLFLGLVYSFLGPDPFVAQMHFLVFFLGRMVHTVAYLGKLRAPTRSLAYTVAQLPCASMALQIVWEAARHL.

Over 1 to 13 (MPPPSLAMVSGQA) the chain is Lumenal. A helical membrane pass occupies residues 14-42 (LPAFLLCSTLLVIKMYAVAVITGQVRLRK). Position 39 (arginine 39) interacts with glutathione. At 43-61 (KAFANPEDALRHGGLQFHR) the chain is on the cytoplasmic side. The chain crosses the membrane as a helical span at residues 62–91 (DDQDVERCLRAHRNDMETIYPFLFLGLVYS). Glutathione is bound at residue 74–78 (RNDME). The Lumenal portion of the chain corresponds to 92-96 (FLGPD). Residues 97–120 (PFVAQMHFLVFFLGRMVHTVAYLG) traverse the membrane as a helical segment. The glutathione site is built by histidine 114 and tyrosine 118. The Cytoplasmic segment spans residues 121–124 (KLRA). The helical transmembrane segment at 125 to 153 (PTRSLAYTVAQLPCASMALQIVWEAARHL) threads the bilayer. 127–131 (RSLAY) is a glutathione binding site.

Belongs to the MAPEG family. In terms of assembly, homotrimer. Requires glutathione as cofactor.

It localises to the membrane. It is found in the cytoplasm. The protein resides in the perinuclear region. It carries out the reaction prostaglandin H2 = prostaglandin E2. It catalyses the reaction 2-glyceryl-prostaglandin H2 = 2-glyceryl-prostaglandin E2. The enzyme catalyses prostaglandin G2 = (15S)-15-hydroperoxy-prostaglandin E2. The catalysed reaction is 1-chloro-2,4-dinitrobenzene + glutathione = 2,4-dinitrophenyl-S-glutathione + chloride + H(+). It carries out the reaction (5S)-hydroperoxy-(6E,8Z,11Z,14Z)-eicosatetraenoate + 2 glutathione = (5S)-hydroxy-(6E,8Z,11Z,14Z)-eicosatetraenoate + glutathione disulfide + H2O. The protein operates within lipid metabolism; prostaglandin biosynthesis. Terminal enzyme of the cyclooxygenase (COX)-2-mediated prostaglandin E2 (PGE2) biosynthetic pathway. Catalyzes the glutathione-dependent oxidoreduction of prostaglandin endoperoxide H2 (PGH2) to prostaglandin E2 (PGE2) in response to inflammatory stimuli. Plays a key role in inflammation response, fever and pain. Also catalyzes the oxidoreduction of endocannabinoids into prostaglandin glycerol esters and PGG2 into 15-hydroperoxy-PGE2. In addition, displays low glutathione transferase and glutathione-dependent peroxidase activities, toward 1-chloro-2,4-dinitrobenzene and 5-hydroperoxyicosatetraenoic acid (5-HPETE), respectively. This chain is Prostaglandin E synthase (PTGES), found in Equus caballus (Horse).